Reading from the N-terminus, the 333-residue chain is Fe(3+)-citrate import system permease protein YfmD (333 aa).

The next 9 membrane-spanning stretches (helical) occupy residues 13-33 (LMMF…NLSV), 67-87 (TLIG…MQAM), 97-117 (IFGV…ILPA), 121-141 (SSVI…YMIA), 151-171 (LALS…AIII), 201-221 (FSVI…VLGL), 238-258 (ILIS…AGPI), 279-299 (YVLP…DVLA), and 302-322 (IAFP…TPFF).

The protein belongs to the binding-protein-dependent transport system permease family. FecCD subfamily. The complex is composed of one ATP-binding protein (YfmF), two transmembrane proteins (YfmD and YfmE) and a solute-binding protein (YfmC).

It is found in the cell membrane. In terms of biological role, part of the ABC transporter complex YfmCDEF involved in citrate-dependent Fe(3+) import. Involved in the translocation of the substrate across the membrane. The chain is Fe(3+)-citrate import system permease protein YfmD (yfmD) from Bacillus subtilis (strain 168).